The sequence spans 473 residues: Photosystem II CP43 reaction center protein (473 aa).

The propeptide occupies 1 to 14 (MKILYSLRRFYHVE). Threonine 15 is modified (N-acetylthreonine). Threonine 15 is subject to Phosphothreonine. The next 5 membrane-spanning stretches (helical) occupy residues 69 to 93 (LFEVAHFVPEKPMYEQGLILLPHLA), 134 to 155 (LLGPETLEESFPFFGYVWKDRN), 178 to 200 (KALYFGGVYDTWAPGGGDVRKIT), 255 to 275 (KPFAWARRAFVWSGEAYLSYS), and 291 to 312 (WFNNTAYPSEFYGPTGPEASQA). Glutamate 367 serves as a coordination point for [CaMn4O5] cluster. The chain crosses the membrane as a helical span at residues 447 to 471 (RARAAAAGFEKGIDRDLEPVLYMNP).

Belongs to the PsbB/PsbC family. PsbC subfamily. PSII is composed of 1 copy each of membrane proteins PsbA, PsbB, PsbC, PsbD, PsbE, PsbF, PsbH, PsbI, PsbJ, PsbK, PsbL, PsbM, PsbT, PsbX, PsbY, PsbZ, Psb30/Ycf12, at least 3 peripheral proteins of the oxygen-evolving complex and a large number of cofactors. It forms dimeric complexes. Binds multiple chlorophylls and provides some of the ligands for the Ca-4Mn-5O cluster of the oxygen-evolving complex. It may also provide a ligand for a Cl- that is required for oxygen evolution. PSII binds additional chlorophylls, carotenoids and specific lipids. is required as a cofactor.

Its subcellular location is the plastid. The protein localises to the chloroplast thylakoid membrane. In terms of biological role, one of the components of the core complex of photosystem II (PSII). It binds chlorophyll and helps catalyze the primary light-induced photochemical processes of PSII. PSII is a light-driven water:plastoquinone oxidoreductase, using light energy to abstract electrons from H(2)O, generating O(2) and a proton gradient subsequently used for ATP formation. The sequence is that of Photosystem II CP43 reaction center protein from Brachypodium distachyon (Purple false brome).